A 266-amino-acid polypeptide reads, in one-letter code: Apolipoprotein A-I (266 aa).

The signal sequence occupies residues 1–18 (MKAVVLTLAVLFLTGSQA). 2 tandem repeats follow at residues 67–88 (LKLLDNWDSLSSTVAKLREQIG) and 89–110 (PVTQEFWDNLEKETEVLRQEMS). A 10 X approximate tandem repeats region spans residues 67 to 266 (LKLLDNWDSL…DEATKKLNSQ (200 aa)). Methionine sulfoxide is present on M109. A 3; half-length repeat occupies 111-121 (KDLEEVKKKVQ). Repeat copies occupy residues 122–143 (PYLDEFQSKWHEEVELYRQKVA), 144–165 (PLGAELREGARQKLQELQEKLS), 166–187 (PLAEELRDRARAHVDALRAQLA), 188–209 (PYSEQLRERLAARLQALKEGGG), and 210–231 (AALTEYHAKASEHLSALREKAK). The 9; half-length repeat unit spans residues 232 to 242 (PALEDLRQGLL). Copy 10 of the repeat occupies 243-266 (PVLENFRVSLLAAVDEATKKLNSQ).

It belongs to the apolipoprotein A1/A4/E family. In terms of assembly, homodimer. Interacts with APOA1BP and CLU. Component of a sperm activating protein complex (SPAP), consisting of APOA1, an immunoglobulin heavy chain, an immunoglobulin light chain and albumin. Interacts with NDRG1. Interacts with SCGB3A2. Interacts with NAXE and YJEFN3. In terms of processing, glycosylated. Palmitoylated. Post-translationally, phosphorylation sites are present in the extracellular medium.

It is found in the secreted. Functionally, participates in the reverse transport of cholesterol from tissues to the liver for excretion by promoting cholesterol efflux from tissues and by acting as a cofactor for the lecithin cholesterol acyltransferase (LCAT). As part of the SPAP complex, activates spermatozoa motility. The polypeptide is Apolipoprotein A-I (APOA1) (Mirounga angustirostris (Northern elephant seal)).